We begin with the raw amino-acid sequence, 139 residues long: Nucleoside diphosphate kinase (139 aa).

Residues K10, F58, R86, T92, R104, and N114 each contribute to the ATP site. The Pros-phosphohistidine intermediate role is filled by H117.

Belongs to the NDK family. In terms of assembly, homotetramer. Mg(2+) serves as cofactor.

Its subcellular location is the cytoplasm. It catalyses the reaction a 2'-deoxyribonucleoside 5'-diphosphate + ATP = a 2'-deoxyribonucleoside 5'-triphosphate + ADP. The catalysed reaction is a ribonucleoside 5'-diphosphate + ATP = a ribonucleoside 5'-triphosphate + ADP. Major role in the synthesis of nucleoside triphosphates other than ATP. The ATP gamma phosphate is transferred to the NDP beta phosphate via a ping-pong mechanism, using a phosphorylated active-site intermediate. This is Nucleoside diphosphate kinase from Rhodococcus erythropolis (strain PR4 / NBRC 100887).